The chain runs to 502 residues: ATP synthase subunit alpha (502 aa).

Position 169-176 (169-176) interacts with ATP; the sequence is GDRQTGKT.

Belongs to the ATPase alpha/beta chains family. In terms of assembly, F-type ATPases have 2 components, CF(1) - the catalytic core - and CF(0) - the membrane proton channel. CF(1) has five subunits: alpha(3), beta(3), gamma(1), delta(1), epsilon(1). CF(0) has three main subunits: a(1), b(2) and c(9-12). The alpha and beta chains form an alternating ring which encloses part of the gamma chain. CF(1) is attached to CF(0) by a central stalk formed by the gamma and epsilon chains, while a peripheral stalk is formed by the delta and b chains.

The protein resides in the cell membrane. The enzyme catalyses ATP + H2O + 4 H(+)(in) = ADP + phosphate + 5 H(+)(out). Produces ATP from ADP in the presence of a proton gradient across the membrane. The alpha chain is a regulatory subunit. The polypeptide is ATP synthase subunit alpha (Streptococcus pyogenes serotype M18 (strain MGAS8232)).